Consider the following 396-residue polypeptide: Probable tRNA sulfurtransferase (396 aa).

The region spanning 63-166 (AAAARASARV…GRRAYFFDTI (104 aa)) is the THUMP domain. Residues 184 to 185 (LY), R266, G288, and Q297 contribute to the ATP site.

The protein belongs to the ThiI family.

The protein localises to the cytoplasm. It catalyses the reaction [ThiI sulfur-carrier protein]-S-sulfanyl-L-cysteine + a uridine in tRNA + 2 reduced [2Fe-2S]-[ferredoxin] + ATP + H(+) = [ThiI sulfur-carrier protein]-L-cysteine + a 4-thiouridine in tRNA + 2 oxidized [2Fe-2S]-[ferredoxin] + AMP + diphosphate. The catalysed reaction is [ThiS sulfur-carrier protein]-C-terminal Gly-Gly-AMP + S-sulfanyl-L-cysteinyl-[cysteine desulfurase] + AH2 = [ThiS sulfur-carrier protein]-C-terminal-Gly-aminoethanethioate + L-cysteinyl-[cysteine desulfurase] + A + AMP + 2 H(+). Its pathway is cofactor biosynthesis; thiamine diphosphate biosynthesis. In terms of biological role, catalyzes the ATP-dependent transfer of a sulfur to tRNA to produce 4-thiouridine in position 8 of tRNAs, which functions as a near-UV photosensor. Also catalyzes the transfer of sulfur to the sulfur carrier protein ThiS, forming ThiS-thiocarboxylate. This is a step in the synthesis of thiazole, in the thiamine biosynthesis pathway. The sulfur is donated as persulfide by IscS. This is Probable tRNA sulfurtransferase from Aeropyrum pernix (strain ATCC 700893 / DSM 11879 / JCM 9820 / NBRC 100138 / K1).